The following is a 263-amino-acid chain: Glucosamine-6-phosphate deaminase (263 aa).

Asp72 functions as the Proton acceptor; for enolization step in the catalytic mechanism. Asp141 functions as the For ring-opening step in the catalytic mechanism. Catalysis depends on His143, which acts as the Proton acceptor; for ring-opening step. Glu148 functions as the For ring-opening step in the catalytic mechanism.

The protein belongs to the glucosamine/galactosamine-6-phosphate isomerase family. NagB subfamily.

It catalyses the reaction alpha-D-glucosamine 6-phosphate + H2O = beta-D-fructose 6-phosphate + NH4(+). It participates in amino-sugar metabolism; N-acetylneuraminate degradation; D-fructose 6-phosphate from N-acetylneuraminate: step 5/5. Allosterically activated by N-acetylglucosamine 6-phosphate (GlcNAc6P). Functionally, catalyzes the reversible isomerization-deamination of glucosamine 6-phosphate (GlcN6P) to form fructose 6-phosphate (Fru6P) and ammonium ion. This chain is Glucosamine-6-phosphate deaminase, found in Phocaeicola vulgatus (strain ATCC 8482 / DSM 1447 / JCM 5826 / CCUG 4940 / NBRC 14291 / NCTC 11154) (Bacteroides vulgatus).